A 212-amino-acid chain; its full sequence is Putative protein phosphatase 2C 53 (212 aa).

Residues 1–208 (MEDRFSAITN…DDISVMLIPL (208 aa)) form the PPM-type phosphatase domain. Residue Asp199 coordinates Mn(2+).

Belongs to the PP2C family. Mg(2+) serves as cofactor. The cofactor is Mn(2+).

It carries out the reaction O-phospho-L-seryl-[protein] + H2O = L-seryl-[protein] + phosphate. It catalyses the reaction O-phospho-L-threonyl-[protein] + H2O = L-threonyl-[protein] + phosphate. This chain is Putative protein phosphatase 2C 53, found in Arabidopsis thaliana (Mouse-ear cress).